The sequence spans 306 residues: UDP-3-O-acyl-N-acetylglucosamine deacetylase (306 aa).

3 residues coordinate Zn(2+): histidine 79, histidine 238, and aspartate 242. Catalysis depends on histidine 265, which acts as the Proton donor.

The protein belongs to the LpxC family. Zn(2+) is required as a cofactor.

It carries out the reaction a UDP-3-O-[(3R)-3-hydroxyacyl]-N-acetyl-alpha-D-glucosamine + H2O = a UDP-3-O-[(3R)-3-hydroxyacyl]-alpha-D-glucosamine + acetate. It participates in glycolipid biosynthesis; lipid IV(A) biosynthesis; lipid IV(A) from (3R)-3-hydroxytetradecanoyl-[acyl-carrier-protein] and UDP-N-acetyl-alpha-D-glucosamine: step 2/6. In terms of biological role, catalyzes the hydrolysis of UDP-3-O-myristoyl-N-acetylglucosamine to form UDP-3-O-myristoylglucosamine and acetate, the committed step in lipid A biosynthesis. In Shewanella sp. (strain ANA-3), this protein is UDP-3-O-acyl-N-acetylglucosamine deacetylase.